The primary structure comprises 645 residues: Methionine--tRNA ligase (645 aa).

Positions 13-23 (YYPSTNLHIGN) match the 'HIGH' region motif. Residues Cys-128, Cys-131, Cys-145, and Cys-148 each coordinate Zn(2+). The short motif at 298-302 (KMSKS) is the 'KMSKS' region element. Position 301 (Lys-301) interacts with ATP. The 102-residue stretch at 544–645 (DFDKIDLRVV…GEMLTGSQVR (102 aa)) folds into the tRNA-binding domain.

Belongs to the class-I aminoacyl-tRNA synthetase family. MetG type 2A subfamily. In terms of assembly, homodimer. Zn(2+) serves as cofactor.

It localises to the cytoplasm. It catalyses the reaction tRNA(Met) + L-methionine + ATP = L-methionyl-tRNA(Met) + AMP + diphosphate. Its function is as follows. Is required not only for elongation of protein synthesis but also for the initiation of all mRNA translation through initiator tRNA(fMet) aminoacylation. The protein is Methionine--tRNA ligase (metG) of Clostridium perfringens (strain 13 / Type A).